The chain runs to 96 residues: Co-chaperonin GroES (96 aa).

The protein belongs to the GroES chaperonin family. In terms of assembly, heptamer of 7 subunits arranged in a ring. Interacts with the chaperonin GroEL.

It localises to the cytoplasm. Functionally, together with the chaperonin GroEL, plays an essential role in assisting protein folding. The GroEL-GroES system forms a nano-cage that allows encapsulation of the non-native substrate proteins and provides a physical environment optimized to promote and accelerate protein folding. GroES binds to the apical surface of the GroEL ring, thereby capping the opening of the GroEL channel. The polypeptide is Co-chaperonin GroES (Shewanella oneidensis (strain ATCC 700550 / JCM 31522 / CIP 106686 / LMG 19005 / NCIMB 14063 / MR-1)).